Reading from the N-terminus, the 836-residue chain is General negative regulator of transcription subunit 3 (836 aa).

Coiled-coil stretches lie at residues 36–68 (NNPS…WQSS), 119–195 (RERR…ANEE), and 255–292 (NTSD…AKNA). Residues 252 to 267 (EDNNTSDANESLQDIS) are compositionally biased toward polar residues. 4 disordered regions span residues 252–284 (EDNN…AKKA), 296–391 (AIPV…LKPA), 410–471 (AVEK…NTGA), and 513–532 (NPKS…PENT). Over residues 268-283 (KLSKKEQRKLEREAKK) the composition is skewed to basic and acidic residues. Ser303, Ser307, and Ser322 each carry phosphoserine. The segment covering 341–386 (SIKSPRSSADNLLPSLQKSPSSATPETPTNVHTHIHQTPNGITGAT) has biased composition (polar residues). Positions 418-446 (TSASSTISNTSTKTPTTAAATTTSSNANS) are enriched in low complexity. A phosphoserine mark is found at Ser446 and Ser450. Composition is skewed to polar residues over residues 447–468 (RIGS…QPDN) and 522–531 (TTVNQNGPEN). Lys535 is covalently cross-linked (Glycyl lysine isopeptide (Lys-Gly) (interchain with G-Cter in ubiquitin)). Residues 537–583 (MEQKEEESPEERNKLQVPTFGVFDDDFESDRDSETEPEEEEQPSTPK) form a disordered region. Positions 559–578 (FDDDFESDRDSETEPEEEEQ) are enriched in acidic residues. Phosphoserine is present on residues Ser565 and Ser569. Thr571 bears the Phosphothreonine mark. Ser657 is modified (phosphoserine). Positions 803-831 (NVNDQSNVTLEQQKQEISHGKQLLKQLKQ) form a coiled coil.

It belongs to the CNOT2/3/5 family. In terms of assembly, forms a NOT protein complex that comprises NOT1, NOT2, NOT3, NOT4 and NOT5. Subunit of the 1.0 MDa CCR4-NOT core complex that contains CCR4, CAF1, NOT1, NOT2, NOT3, NOT4, NOT5, CAF40 and CAF130. The core complex probably is part of a less characterized 1.9 MDa CCR4-NOT complex.

Its subcellular location is the cytoplasm. It is found in the nucleus. Functionally, acts as a component of the CCR4-NOT core complex, which in the nucleus seems to be a general transcription factor, and in the cytoplasm the major mRNA deadenylase involved in mRNA turnover. The NOT protein subcomplex negatively regulates the basal and activated transcription of many genes. Preferentially affects TC-type TATA element-dependent transcription. Could directly or indirectly inhibit component(s) of the general transcription machinery. The chain is General negative regulator of transcription subunit 3 (NOT3) from Saccharomyces cerevisiae (strain ATCC 204508 / S288c) (Baker's yeast).